The following is an 884-amino-acid chain: Schlafen family member 5 (884 aa).

574–581 (GLPGSGKT) contacts ATP.

The protein belongs to the Schlafen family. Subgroup III subfamily.

Its function is as follows. May have a role in hematopoietic cell differentiation. The protein is Schlafen family member 5 (Slfn5) of Mus musculus (Mouse).